Consider the following 293-residue polypeptide: Acetylglutamate kinase (293 aa).

Residues 71–72 (GG), arginine 93, and asparagine 186 contribute to the substrate site.

It belongs to the acetylglutamate kinase family. ArgB subfamily.

Its subcellular location is the cytoplasm. It catalyses the reaction N-acetyl-L-glutamate + ATP = N-acetyl-L-glutamyl 5-phosphate + ADP. It participates in amino-acid biosynthesis; L-arginine biosynthesis; N(2)-acetyl-L-ornithine from L-glutamate: step 2/4. Functionally, catalyzes the ATP-dependent phosphorylation of N-acetyl-L-glutamate. The polypeptide is Acetylglutamate kinase (Synechococcus sp. (strain WH7803)).